A 338-amino-acid polypeptide reads, in one-letter code: Lipoate-protein ligase A (338 aa).

The BPL/LPL catalytic domain occupies 29–216 (PADQRVLFLW…AYCEHYQQQV (188 aa)). ATP contacts are provided by residues Arg71, 76–79 (GAVF), and Lys134. Lys134 serves as a coordination point for (R)-lipoate.

It belongs to the LplA family. As to quaternary structure, monomer.

The protein resides in the cytoplasm. It carries out the reaction L-lysyl-[lipoyl-carrier protein] + (R)-lipoate + ATP = N(6)-[(R)-lipoyl]-L-lysyl-[lipoyl-carrier protein] + AMP + diphosphate + H(+). Its pathway is protein modification; protein lipoylation via exogenous pathway; protein N(6)-(lipoyl)lysine from lipoate: step 1/2. It participates in protein modification; protein lipoylation via exogenous pathway; protein N(6)-(lipoyl)lysine from lipoate: step 2/2. In terms of biological role, catalyzes both the ATP-dependent activation of exogenously supplied lipoate to lipoyl-AMP and the transfer of the activated lipoyl onto the lipoyl domains of lipoate-dependent enzymes. The chain is Lipoate-protein ligase A from Vibrio cholerae serotype O1 (strain ATCC 39541 / Classical Ogawa 395 / O395).